Here is a 124-residue protein sequence, read N- to C-terminus: Large ribosomal subunit protein uL18 (124 aa).

This sequence belongs to the universal ribosomal protein uL18 family. Part of the 50S ribosomal subunit; part of the 5S rRNA/L5/L18/L25 subcomplex. Contacts the 5S and 23S rRNAs.

This is one of the proteins that bind and probably mediate the attachment of the 5S RNA into the large ribosomal subunit, where it forms part of the central protuberance. This Desulfosudis oleivorans (strain DSM 6200 / JCM 39069 / Hxd3) (Desulfococcus oleovorans) protein is Large ribosomal subunit protein uL18.